The chain runs to 179 residues: UPF0227 protein Swoo_1808 (179 aa).

The protein belongs to the UPF0227 family.

In Shewanella woodyi (strain ATCC 51908 / MS32), this protein is UPF0227 protein Swoo_1808.